Reading from the N-terminus, the 71-residue chain is Large ribosomal subunit protein bL31 (71 aa).

Residues Cys-16, Cys-18, Cys-38, and Cys-41 each coordinate Zn(2+).

This sequence belongs to the bacterial ribosomal protein bL31 family. Type A subfamily. In terms of assembly, part of the 50S ribosomal subunit. The cofactor is Zn(2+).

Its function is as follows. Binds the 23S rRNA. The sequence is that of Large ribosomal subunit protein bL31 from Francisella tularensis subsp. novicida (strain U112).